The chain runs to 418 residues: Mitochondrial outer membrane protein SLC25A46 (418 aa).

2 positions are modified to phosphoserine: Ser32 and Ser35. Position 45 is a phosphothreonine (Thr45). The segment at 46–96 (PPDIPGSRNLHWGEKSPSYGVPSAPPTLEGPAEEPFPGGGDGPRPGRSSEQ) is disordered. One copy of the Solcar 1 repeat lies at 96–187 (QLNRFAGFGI…GIISEFTPLP (92 aa)). Helical transmembrane passes span 103–123 (FGIG…CIVL), 167–187 (FIVQ…TPLP), 202–222 (HLLL…ASLI), 258–278 (LLPL…HYII), 314–334 (FPEL…LYPL), and 382–402 (VFGF…HATI). One copy of the Solcar 2 repeat lies at 311–416 (DAYFPELIAN…KIIYSTLLQN (106 aa)).

It belongs to the mitochondrial carrier (TC 2.A.29) family. Associates with the mitochondrial contact site and cristae organizing system (MICOS) complex. May associate with the endoplasmic reticulum membrane protein complex (EMC). As to expression, widely expressed. Highly expressed in hindbrain, spinal cord and brain coronal sections containing corpus callosum, fornix, optic chiasm, thalamus, hypothalamus, midbrain, pons and cerebellum.

It localises to the mitochondrion outer membrane. Transmembrane protein of the mitochondrial outer membrane that controls mitochondrial organization. May regulate the assembly of the MICOS (mitochondrial contact site and cristae organizing system) complex which is essential to the biogenesis and dynamics of mitochondrial cristae, the inwards folds of the inner mitochondrial membrane. Through its interaction with the EMC (endoplasmic reticulum membrane protein complex), could regulate mitochondrial lipid homeostasis and thereby mitochondrial fission. The protein is Mitochondrial outer membrane protein SLC25A46 of Rattus norvegicus (Rat).